A 157-amino-acid chain; its full sequence is Ciliary microtubule inner protein 5 (157 aa).

Disordered stretches follow at residues 1 to 57 (MGSR…SALG) and 92 to 124 (DPMGNKKEPVKLPDHVPRFSDTVPNSTNRAVGS). Positions 92 to 109 (DPMGNKKEPVKLPDHVPR) are enriched in basic and acidic residues.

The protein localises to the cell projection. It localises to the cilium. The sequence is that of Ciliary microtubule inner protein 5 (CIMIP5) from Bos taurus (Bovine).